Consider the following 286-residue polypeptide: Thymidylate synthase (286 aa).

Arginine 21 contacts dUMP. Asparagine 51 contacts (6R)-5,10-methylene-5,6,7,8-tetrahydrofolate. 150–151 (RR) lines the dUMP pocket. The Nucleophile role is filled by cysteine 170. DUMP-binding positions include 190–193 (RSAD), asparagine 201, and 231–233 (HIY). Aspartate 193 contributes to the (6R)-5,10-methylene-5,6,7,8-tetrahydrofolate binding site. Alanine 285 is a binding site for (6R)-5,10-methylene-5,6,7,8-tetrahydrofolate.

This sequence belongs to the thymidylate synthase family. Bacterial-type ThyA subfamily. In terms of assembly, homodimer.

Its subcellular location is the cytoplasm. It carries out the reaction dUMP + (6R)-5,10-methylene-5,6,7,8-tetrahydrofolate = 7,8-dihydrofolate + dTMP. It participates in pyrimidine metabolism; dTTP biosynthesis. Its function is as follows. Catalyzes the reductive methylation of 2'-deoxyuridine-5'-monophosphate (dUMP) to 2'-deoxythymidine-5'-monophosphate (dTMP) while utilizing 5,10-methylenetetrahydrofolate (mTHF) as the methyl donor and reductant in the reaction, yielding dihydrofolate (DHF) as a by-product. This enzymatic reaction provides an intracellular de novo source of dTMP, an essential precursor for DNA biosynthesis. This Mycoplasmopsis pulmonis (strain UAB CTIP) (Mycoplasma pulmonis) protein is Thymidylate synthase.